Consider the following 860-residue polypeptide: Leucine--tRNA ligase (860 aa).

The 'HIGH' region motif lies at 42 to 52; the sequence is PYPSGRLHMGH. The short motif at 619 to 623 is the 'KMSKS' region element; the sequence is KMSKS. Residue lysine 622 participates in ATP binding.

The protein belongs to the class-I aminoacyl-tRNA synthetase family.

It localises to the cytoplasm. The enzyme catalyses tRNA(Leu) + L-leucine + ATP = L-leucyl-tRNA(Leu) + AMP + diphosphate. The protein is Leucine--tRNA ligase of Escherichia coli O127:H6 (strain E2348/69 / EPEC).